A 401-amino-acid chain; its full sequence is Enoyl-[acyl-carrier-protein] reductase [NADH] 1 (401 aa).

NAD(+) is bound by residues G48–Y53, F74–E75, D111–A112, and L139–A140. Residue Y225 coordinates substrate. Catalysis depends on Y235, which acts as the Proton donor. Residues K244 and V273–T275 contribute to the NAD(+) site.

The protein belongs to the TER reductase family. As to quaternary structure, monomer.

It catalyses the reaction a 2,3-saturated acyl-[ACP] + NAD(+) = a (2E)-enoyl-[ACP] + NADH + H(+). It carries out the reaction a 2,3-saturated acyl-CoA + NAD(+) = a (2E)-enoyl-CoA + NADH + H(+). The catalysed reaction is (2E)-butenoyl-[ACP] + NADH + H(+) = butanoyl-[ACP] + NAD(+). The enzyme catalyses butanoyl-CoA + NAD(+) = (2E)-butenoyl-CoA + NADH + H(+). It participates in lipid metabolism; fatty acid biosynthesis. Weakly inhibited by triclosan. Its function is as follows. Involved in the final reduction of the elongation cycle of fatty acid synthesis (FAS II). Catalyzes the NADH-dependent reduction of a carbon-carbon double bond in an enoyl moiety that is covalently linked to an acyl carrier protein (ACP). It can use both crotonyl-CoA and crotonyl-ACP. In Vibrio cholerae serotype O1 (strain ATCC 39315 / El Tor Inaba N16961), this protein is Enoyl-[acyl-carrier-protein] reductase [NADH] 1.